Reading from the N-terminus, the 1001-residue chain is Non-canonical poly(A) RNA polymerase protein Trf4-1 (1001 aa).

Composition is skewed to low complexity over residues 44 to 86 (TING…NNSS) and 127 to 163 (RNST…STNG). 2 disordered regions span residues 44–92 (TING…PYLS) and 115–238 (QQQQ…AGGA). The span at 164 to 178 (PGAGTGTSTGAGGTG) shows a compositional bias: gly residues. Over residues 179–216 (TNSPATTASSTAATTTGPATSMSDTSNNPPQSTTTPAS) the composition is skewed to low complexity. Positions 328 and 330 each coordinate Mn(2+). A PAP-associated domain is found at 458–517 (NLGVLLLEFFELYGRRFNYMKIGISIKNGGRYMPKDELQRDMVDGHRPSLLCIEDPLTPG). Disordered stretches follow at residues 631–652 (PTAH…PGAH), 687–740 (QQQQ…AQEV), 767–963 (ASNS…LRGT), and 977–1001 (SSES…RDER). Basic residues predominate over residues 635-649 (GHSHAHSHSHGHAHP). 2 stretches are compositionally biased toward low complexity: residues 687–708 (QQQQ…NQSQ) and 768–788 (SNSW…TGSS). Residues 827–841 (VGTGSNRGGGDGSGG) are compositionally biased toward gly residues. Residues 844–854 (YNQRNNHNSSG) show a composition bias toward polar residues. Over residues 855 to 880 (YYHQQYYVPPPMQQQLSKSNSSSNYH) the composition is skewed to low complexity. Residues 881–912 (QQHHHSHSHGNHSHRQQHHHQQQHHHQQRPQH) are compositionally biased toward basic residues. Low complexity-rich tracts occupy residues 932-955 (SAGN…SNNS) and 977-992 (SSES…SSRS).

The protein belongs to the DNA polymerase type-B-like family. Mn(2+) is required as a cofactor.

It is found in the cytoplasm. The enzyme catalyses RNA(n) + ATP = RNA(n)-3'-adenine ribonucleotide + diphosphate. In terms of biological role, involved in a post-transcriptional quality control mechanism limiting inappropriate expression of genetic information. Polyadenylation is required for the degradative activity of the exosome on several of its nuclear RNA substrates. Polyadenylates RNA processing and degradation intermediates of snRNAs and mRNAs. This is Non-canonical poly(A) RNA polymerase protein Trf4-1 from Drosophila melanogaster (Fruit fly).